Here is a 198-residue protein sequence, read N- to C-terminus: MEHYISLFVKSVFIENMALSFFLGMCTFLAVSKKVSTSFGLGIAVIVVLGIAVPVNQLVYTHILKENALVDGVDLSFLNFITFIGVIAALVQILEMFLDKFVPSLYSALGIFLPLITVNCAIFGGVSFMVQREYNFTESVVYGIGAGTGWMLAIVALAGLTEKMKYADVPAGLRGLGITFITVGLMALGFMSFSGIQL.

6 helical membrane-spanning segments follow: residues 11–31 (SVFI…FLAV), 35–55 (VSTS…AVPV), 77–97 (FLNF…LEMF), 110–130 (GIFL…SFMV), 140–160 (VVYG…LAGL), and 176–196 (LGIT…FSGI).

This sequence belongs to the NqrDE/RnfAE family. As to quaternary structure, composed of six subunits; NqrA, NqrB, NqrC, NqrD, NqrE and NqrF.

The protein resides in the cell inner membrane. It catalyses the reaction a ubiquinone + n Na(+)(in) + NADH + H(+) = a ubiquinol + n Na(+)(out) + NAD(+). Its function is as follows. NQR complex catalyzes the reduction of ubiquinone-1 to ubiquinol by two successive reactions, coupled with the transport of Na(+) ions from the cytoplasm to the periplasm. NqrA to NqrE are probably involved in the second step, the conversion of ubisemiquinone to ubiquinol. The chain is Na(+)-translocating NADH-quinone reductase subunit E from Actinobacillus succinogenes (strain ATCC 55618 / DSM 22257 / CCUG 43843 / 130Z).